Reading from the N-terminus, the 101-residue chain is MNLERVSNEEKLNLCRKYYLGGFAFLPFLWLVNIFWFFREAFLAPAYTEQSQIKGYVWRSAVGFLFWVIILATWITIFQIYRPRWGALGDYLSFTIPLGTP.

The Cytoplasmic segment spans residues 1–17 (MNLERVSNEEKLNLCRK). Positions 18 to 36 (YYLGGFAFLPFLWLVNIFW) form an intramembrane region, helical. Over 37 to 57 (FFREAFLAPAYTEQSQIKGYV) the chain is Cytoplasmic. Residues 58–78 (WRSAVGFLFWVIILATWITIF) form a helical membrane-spanning segment. Residues 79–101 (QIYRPRWGALGDYLSFTIPLGTP) are Lumenal-facing.

Belongs to the PEN-2 family. In terms of assembly, the functional gamma-secretase complex is composed of at least four polypeptides: a presenilin homodimer (PSEN1 or PSEN2), nicastrin (NCSTN), APH1 (APH1A or APH1B) and PSENEN.

It localises to the endoplasmic reticulum membrane. The protein resides in the golgi apparatus. Its subcellular location is the golgi stack membrane. It is found in the cell membrane. The protein localises to the membrane. Functionally, essential subunit of the gamma-secretase complex, an endoprotease complex that catalyzes the intramembrane cleavage of integral membrane proteins such as Notch receptors and APP (amyloid-beta precursor protein). The gamma-secretase complex plays a role in Notch and Wnt signaling cascades and regulation of downstream processes via its role in processing key regulatory proteins, and by regulating cytosolic CTNNB1 levels. PSENEN modulates both endoproteolysis of presenilin and gamma-secretase activity. This is Gamma-secretase subunit PEN-2 (Psenen) from Mus musculus (Mouse).